Consider the following 338-residue polypeptide: Phenylalanine--tRNA ligase alpha subunit (338 aa).

Glu-253 provides a ligand contact to Mg(2+).

The protein belongs to the class-II aminoacyl-tRNA synthetase family. Phe-tRNA synthetase alpha subunit type 1 subfamily. Tetramer of two alpha and two beta subunits. Mg(2+) is required as a cofactor.

It is found in the cytoplasm. The enzyme catalyses tRNA(Phe) + L-phenylalanine + ATP = L-phenylalanyl-tRNA(Phe) + AMP + diphosphate + H(+). This is Phenylalanine--tRNA ligase alpha subunit from Geotalea uraniireducens (strain Rf4) (Geobacter uraniireducens).